The chain runs to 56 residues: Putative zinc-binding protein YnfU (56 aa).

Zn(2+) is bound by residues Cys-19, Cys-22, Cys-41, and Cys-44.

The cofactor is Zn(2+).

The chain is Putative zinc-binding protein YnfU from Escherichia coli (strain K12).